We begin with the raw amino-acid sequence, 158 residues long: C-type natriuretic peptide 3 (158 aa).

An N-terminal signal peptide occupies residues 1–21 (MSLNLPGYALFFILLVASSGA). The propeptide occupies 22–136 (KPAPDLQILE…SKRSRSRYKK (115 aa)). Positions 32-95 (PPLSSLEEQE…EVQERGRGTG (64 aa)) are disordered. The span at 47–64 (VQEKVQEQQEEVQEKVQE) shows a compositional bias: basic and acidic residues. The segment covering 65–86 (QQEEVQEQQEEVQEQQEEQQEE) has biased composition (acidic residues). C142 and C158 are joined by a disulfide.

It belongs to the natriuretic peptide family.

The protein localises to the secreted. Its function is as follows. Exhibits natriuretic and vasodepressant activity. Has cGMP-stimulating activity. May help to regulate body fluid homeostasis in a variety of aquatic environments. The chain is C-type natriuretic peptide 3 from Takifugu rubripes (Japanese pufferfish).